The sequence spans 582 residues: Inactive metallocarboxypeptidase ECM14 (582 aa).

The first 20 residues, 1 to 20 (MHILQVITGATLVSVPFVSA), serve as a signal peptide directing secretion. The propeptide occupies 21–172 (IPSSTSEFLP…QAVYESYPQP (152 aa)). Residues 200-522 (DYQPLSVIIP…NAVLVFGQFL (323 aa)) form the Peptidase M14 domain. Residues H265 and E268 each coordinate Zn(2+). Residues 265–268 (HARE), R323, and 340–341 (DR) contribute to the substrate site. C334 and C357 are joined by a disulfide. N381 and N387 each carry an N-linked (GlcNAc...) asparagine glycan. H397 is a Zn(2+) binding site. 398-399 (SY) serves as a coordination point for substrate. Over residues 561 to 571 (SNQLEDDDNEN) the composition is skewed to acidic residues. Positions 561 to 582 (SNQLEDDDNENDTLLGFRTQKV) are disordered. The N-linked (GlcNAc...) asparagine glycan is linked to N571.

Belongs to the peptidase M14 family. Zn(2+) serves as cofactor.

The protein resides in the vacuole. It is found in the secreted. Functionally, inactive carboxypeptidase that may play a role in cell wall organization and biogenesis. In Coccidioides posadasii (strain RMSCC 757 / Silveira) (Valley fever fungus), this protein is Inactive metallocarboxypeptidase ECM14 (ECM14).